We begin with the raw amino-acid sequence, 452 residues long: Pup--protein ligase (452 aa).

Glu-9 provides a ligand contact to Mg(2+). Arg-53 contributes to the ATP binding site. Tyr-55 is a Mg(2+) binding site. Asp-57 (proton acceptor) is an active-site residue. Glu-63 provides a ligand contact to Mg(2+). Positions 66 and 419 each coordinate ATP.

This sequence belongs to the Pup ligase/Pup deamidase family. Pup-conjugating enzyme subfamily.

The enzyme catalyses ATP + [prokaryotic ubiquitin-like protein]-L-glutamate + [protein]-L-lysine = ADP + phosphate + N(6)-([prokaryotic ubiquitin-like protein]-gamma-L-glutamyl)-[protein]-L-lysine.. The protein operates within protein degradation; proteasomal Pup-dependent pathway. Its pathway is protein modification; protein pupylation. Its function is as follows. Catalyzes the covalent attachment of the prokaryotic ubiquitin-like protein modifier Pup to the proteasomal substrate proteins, thereby targeting them for proteasomal degradation. This tagging system is termed pupylation. The ligation reaction involves the side-chain carboxylate of the C-terminal glutamate of Pup and the side-chain amino group of a substrate lysine. The protein is Pup--protein ligase of Thermobifida fusca (strain YX).